Consider the following 135-residue polypeptide: Large ribosomal subunit protein eL27 (135 aa).

Belongs to the eukaryotic ribosomal protein eL27 family.

In Pisum sativum (Garden pea), this protein is Large ribosomal subunit protein eL27 (RPL27).